We begin with the raw amino-acid sequence, 677 residues long: MINDKLPKIWHGGDYNPEQWDSKEIWDEDVRMFKLAGIDVATLNVFSWALNQPNEDTYNFDWLDEKINRLYENGIYTCLATSTAAHPAWMAKKYPDVLRVDFYGRKRKFGSRHNSCPNSPTYRKYSERIAETLAERYKDHPAVLIWHVSNEYGGYCYCDNCQDAFRNWLSDKYGTLEKLNKAWNTGFWGHTFYEWDEIVAPNMLSEKREDNVSDFQGISLDYRRFQSDRLLDCYKLEYNAIRKHVPTSIPITTNLMGTYPMLDYFKWAKEMDVVSWDNYPSIDTPFSYTAMTHDLMRGLKGGKPFMLMEQTPSQQNWQPYNSLKRPGVMRLWSYQAIGRGADTILYFQLRRSVGACEKYHGAVIEHVGHEHTRVFNEVAQLGQELNGLSDTLLDARVNAKVAIVFDWENRWATELSSGPSVSLDYVNEVHKYYDALYKLNVQVDMIGVEEDLSKYDVVIAPVLYMVKEGYAAKVEKFVENGGTFLTTFFSGIVNETDIVTLGGYPGELRKVLGIWAEEIDALHPDETNQIVVKGSRGILSGKYSCNLLFDLIHTEGAEAVAEYGSDFYKGMPVLTVNKFGKGKAWYVASSPDAEFLVDFLQTVCEEAGVEPLLDVPAGVETTERVKDGQTYLFVLNHNNDEVTIELHGSQYREVLTDEQVSGNLVLKEKGVLILAKV.

Arg112 contributes to the substrate binding site. Cys116 lines the Zn(2+) pocket. Asn150 contributes to the substrate binding site. Catalysis depends on Glu151, which acts as the Proton donor. Positions 156, 158, and 161 each coordinate Zn(2+). Glu309 serves as the catalytic Nucleophile. Substrate contacts are provided by residues Trp317 and Glu357–His360.

It belongs to the glycosyl hydrolase 42 family. In terms of assembly, dimer.

The catalysed reaction is Hydrolysis of terminal non-reducing beta-D-galactose residues in beta-D-galactosides.. Its activity is regulated as follows. No activity is lost during treatment with 20 or 100 mM EDTA in Z buffer for 3 hours at 0 degrees Celsius, nor is activity greatly stimulated by the addition of cations. Inhibited by 1 mM zinc and 1 mM copper, the levels of activity decrease to 10% of the untreated control. Nickel, cobalt and manganese at concentrations of 10 mM decrease enzyme activity to either 40% (for nickel and cobalt) or 60% (for manganese) of the activity in untreated controls. No change in enzyme activity in the presence of calcium and magnesium at concentrations up to 50 mM. EDTA-treated enzyme exhibits a slight increase in relative specific activity when it is assayed in the presence of 50 mM NaCl or 50 mM KCl, it does not exhibit enhanced activity at concentrations greater than 250 mM. Maintains between 20 and 40% of activity in the presence of 4 M NaCl or 4 M KCl, and it is more active in the presence of KCl than in the presence of NaCl. Retains 50% of activity in the presence of 3 M KCl or 2.5 M NaCl. Functionally, hydrolyzes o-nitrophenyl-beta-D-galactopyranoside (ONPG), p-nitrophenyl-beta-D-galactopyranoside (PNPG), 5-bromo-4-chloro-3-indoyl-beta-D-galactosde (X-gal), o-nitrophenyl-beta-D-fucopyranoside (ONPF) and p-nitrophenyl-beta-D-fucopyranoside (PNPF) with greatest activity towards ONPG and PNPG and low levels of activity with ONPF and PNPF. Detectable, but very low levels of activity towards p-nitrophenyl-beta-lactose (PNPL), p-nitrophenyl-beta-cellobiose (PNPC), p-nitrophenyl-alpha-galactopyranoside (PNP-alpha-G), and p-nitrophenyl-beta-xylopyranoside (PNPX). The polypeptide is Beta-galactosidase BgaA (Planococcus sp. (strain 'SOS Orange')).